The chain runs to 341 residues: MYTLARQLLFKLSPETSHDLSLDLIGAGGRLGLNGMLCKQPAALPVSVMGLNFANPVGLAAGLDKNGAAIDGFAQLGFGFVEIGTVTPRPQPGNPKPRLFRLPEATAIINRMGFNNLGVDHLLERVRAARYNGVLGINIGKNFDTPVERAVDDYLICLDKVYTAASYITVNVSSPNTPGLRSLQFGDSLKQLLDALAERREQLAVTHGKRVPLAIKIAPDMSDEETALVAAALMASGMDAVIATNTTLGREGVEALPHGGEAGGLSGAPVLAKSTHIVKVLAGELGGKLPIIAAGGITEGRHAAEKIAAGASLVQIYSGFIYKGPALIREAVDAIAAMPRV.

Residues 61–65 and Thr85 each bind FMN; that span reads AGLDK. Residue Lys65 participates in substrate binding. 110–114 is a binding site for substrate; sequence NRMGF. 2 residues coordinate FMN: Asn138 and Asn171. Asn171 is a substrate binding site. Ser174 serves as the catalytic Nucleophile. Asn176 serves as a coordination point for substrate. Positions 216 and 244 each coordinate FMN. Residue 245 to 246 coordinates substrate; sequence NT. FMN is bound by residues Gly267, Gly296, and 317-318; that span reads YS.

Belongs to the dihydroorotate dehydrogenase family. Type 2 subfamily. Monomer. FMN serves as cofactor.

Its subcellular location is the cell membrane. It catalyses the reaction (S)-dihydroorotate + a quinone = orotate + a quinol. The protein operates within pyrimidine metabolism; UMP biosynthesis via de novo pathway; orotate from (S)-dihydroorotate (quinone route): step 1/1. Functionally, catalyzes the conversion of dihydroorotate to orotate with quinone as electron acceptor. The chain is Dihydroorotate dehydrogenase (quinone) from Pseudomonas putida (strain GB-1).